We begin with the raw amino-acid sequence, 338 residues long: Protein RecA (338 aa).

68-75 contributes to the ATP binding site; that stretch reads GPESSGKT.

Belongs to the RecA family.

The protein localises to the cytoplasm. Functionally, can catalyze the hydrolysis of ATP in the presence of single-stranded DNA, the ATP-dependent uptake of single-stranded DNA by duplex DNA, and the ATP-dependent hybridization of homologous single-stranded DNAs. It interacts with LexA causing its activation and leading to its autocatalytic cleavage. The protein is Protein RecA of Citrifermentans bemidjiense (strain ATCC BAA-1014 / DSM 16622 / JCM 12645 / Bem) (Geobacter bemidjiensis).